The chain runs to 105 residues: Fluoride-specific ion channel FluC (105 aa).

3 consecutive transmembrane segments (helical) span residues 14-34 (FPLP…VFVV), 44-64 (LSPL…AFSL), and 79-99 (ALYV…GLWL). Na(+) contacts are provided by Gly54 and Thr57.

It belongs to the fluoride channel Fluc/FEX (TC 1.A.43) family.

The protein localises to the cell inner membrane. It carries out the reaction fluoride(in) = fluoride(out). With respect to regulation, na(+) is not transported, but it plays an essential structural role and its presence is essential for fluoride channel function. Fluoride-specific ion channel. Important for reducing fluoride concentration in the cell, thus reducing its toxicity. This is Fluoride-specific ion channel FluC from Jannaschia sp. (strain CCS1).